We begin with the raw amino-acid sequence, 620 residues long: Membralin (620 aa).

A disordered region spans residues 1 to 33 (MSEHVEPAAPGPGPNGGGGGPAPARGPRTPNLN). At Ser-2 the chain carries N-acetylserine. Residues 22 to 31 (APARGPRTPN) are compositionally biased toward low complexity. Thr-29 is subject to Phosphothreonine. Residues 70 to 90 (FFVLLKALFVLFVLAYIHIVF) traverse the membrane as a helical segment. Asn-189 carries an N-linked (GlcNAc...) asparagine glycan. Helical transmembrane passes span 302–322 (TSYLAAFAIMVIFTLSVSMLL), 346–366 (IAFPAAPLLTVILALVGMEAI), and 426–446 (YSSLALVTSWLFIQHSMIYFF). Disordered stretches follow at residues 474-517 (TPTA…GPVA) and 568-620 (SPLG…EVGS). Composition is skewed to low complexity over residues 499 to 517 (PPALGPVSPGASGSPGPVA) and 568 to 593 (SPLGPAGGLPHAPQDSVPPSDSAASD).

Belongs to the membralin family. Interacts with ERLIN2.

It is found in the endoplasmic reticulum membrane. Its function is as follows. May have a role in the ERAD pathway required for clearance of misfolded proteins in the endoplasmic reticulum (ER). Promotes survival of motor neurons, probably by protecting against ER stress. This Homo sapiens (Human) protein is Membralin (TMEM259).